Here is a 225-residue protein sequence, read N- to C-terminus: Orotate phosphoribosyltransferase (225 aa).

Lys-31 lines the 5-phospho-alpha-D-ribose 1-diphosphate pocket. Phe-39–Phe-40 contributes to the orotate binding site. 5-phospho-alpha-D-ribose 1-diphosphate contacts are provided by residues Tyr-78–Lys-79, Arg-105, Lys-106, Lys-109, His-111, and Asp-130–Ala-138. Positions 134 and 163 each coordinate orotate.

The protein belongs to the purine/pyrimidine phosphoribosyltransferase family. PyrE subfamily. As to quaternary structure, homodimer.

The catalysed reaction is orotidine 5'-phosphate + diphosphate = orotate + 5-phospho-alpha-D-ribose 1-diphosphate. It participates in pyrimidine metabolism; UMP biosynthesis via de novo pathway; UMP from orotate: step 1/2. Functionally, catalyzes the transfer of a ribosyl phosphate group from 5-phosphoribose 1-diphosphate to orotate, leading to the formation of orotidine monophosphate (OMP). This Cryptococcus neoformans var. grubii serotype A (strain H99 / ATCC 208821 / CBS 10515 / FGSC 9487) (Filobasidiella neoformans var. grubii) protein is Orotate phosphoribosyltransferase (URA5).